A 126-amino-acid polypeptide reads, in one-letter code: CD59 glycoprotein (126 aa).

The N-terminal stretch at 1-22 is a signal peptide; the sequence is MRARRGFILLLLLAVLCSTGVS. In terms of domain architecture, UPAR/Ly6 spans 23–110; it reads LRCYNCLDPV…NGAISLLGKT (88 aa). Cystine bridges form between Cys25–Cys48, Cys28–Cys35, Cys41–Cys61, Cys67–Cys85, and Cys86–Cys91. N-linked (GlcNAc...) asparagine glycosylation occurs at Asn38. A lipid anchor (GPI-anchor amidated asparagine) is attached at Asn101. The propeptide at 102–126 is removed in mature form; that stretch reads GAISLLGKTALLVTSVLAAILKPCF.

As to quaternary structure, interacts with T-cell surface antigen CD2. N- and O-glycosylated.

Its subcellular location is the cell membrane. The protein resides in the secreted. Functionally, potent inhibitor of the complement membrane attack complex (MAC) action, which protects self-cells from damage during complement activation. Acts by binding to the beta-haipins of C8 (C8A and C8B) components of the assembling MAC, forming an intermolecular beta-sheet that prevents incorporation of the multiple copies of C9 required for complete formation of the osmolytic pore. The polypeptide is CD59 glycoprotein (Rattus norvegicus (Rat)).